Here is a 73-residue protein sequence, read N- to C-terminus: Arabinogalactan protein 16 (73 aa).

The signal sequence occupies residues 1–26; it reads MASRNSVTGFALFSFVFAVILSLAGA. At Gln27 the chain carries Pyrrolidone carboxylic acid. A 4-hydroxyproline mark is found at Pro31, Pro33, and Pro35. Pro31, Pro33, and Pro35 each carry an O-linked (Ara...) hydroxyproline glycan. Residue Ser37 is the site of GPI-anchor amidated serine attachment. The propeptide at 38–73 is removed in mature form; it reads DGTSIDQGIAYLLMVVALVLTYLIHPLDASSSYSFF.

It belongs to the AG-peptide AGP family. Contains 4-hydroxyproline; hydroxylated on Pro-31, Pro-33 and Pro-35. In terms of processing, O-glycosylated on hydroxyprolines; noncontiguous hydroxylproline residues are glycosylated with arabinogalactan. Predominantly expressed in flowers.

Its subcellular location is the cell membrane. In terms of biological role, proteoglycan that seems to be implicated in diverse developmental roles such as differentiation, cell-cell recognition, embryogenesis and programmed cell death. The protein is Arabinogalactan protein 16 of Arabidopsis thaliana (Mouse-ear cress).